The sequence spans 556 residues: Formate--tetrahydrofolate ligase (556 aa).

65–72 (TPAGEGKS) is an ATP binding site.

It belongs to the formate--tetrahydrofolate ligase family.

It catalyses the reaction (6S)-5,6,7,8-tetrahydrofolate + formate + ATP = (6R)-10-formyltetrahydrofolate + ADP + phosphate. The protein operates within one-carbon metabolism; tetrahydrofolate interconversion. This Natranaerobius thermophilus (strain ATCC BAA-1301 / DSM 18059 / JW/NM-WN-LF) protein is Formate--tetrahydrofolate ligase.